Consider the following 217-residue polypeptide: Probable nicotinate-nucleotide adenylyltransferase (217 aa).

It belongs to the NadD family.

The enzyme catalyses nicotinate beta-D-ribonucleotide + ATP + H(+) = deamido-NAD(+) + diphosphate. It participates in cofactor biosynthesis; NAD(+) biosynthesis; deamido-NAD(+) from nicotinate D-ribonucleotide: step 1/1. Its function is as follows. Catalyzes the reversible adenylation of nicotinate mononucleotide (NaMN) to nicotinic acid adenine dinucleotide (NaAD). This is Probable nicotinate-nucleotide adenylyltransferase from Baumannia cicadellinicola subsp. Homalodisca coagulata.